The following is a 151-amino-acid chain: Late embryogenesis abundant protein Lea14-A (151 aa).

Belongs to the LEA type 2 family.

This chain is Late embryogenesis abundant protein Lea14-A (LEA14-A), found in Gossypium hirsutum (Upland cotton).